The sequence spans 101 residues: Protein PIP-1 (101 aa).

The signal sequence occupies residues 1-23; sequence MGKCLLLPLLLVVLSSLLGFPQA. In terms of domain architecture, UPAR/Ly6 spans 24 to 101; that stretch reads LECFQCQRVS…CHDSPFCNKF (78 aa). 5 disulfides stabilise this stretch: Cys-26–Cys-53, Cys-29–Cys-38, Cys-45–Cys-71, Cys-75–Cys-91, and Cys-92–Cys-98. N-linked (GlcNAc...) asparagine glycosylation occurs at Asn-84.

The protein resides in the secreted. In Sus scrofa (Pig), this protein is Protein PIP-1.